Consider the following 521-residue polypeptide: Tetratricopeptide repeat and J domain-containing co-chaperone DNJ1 (521 aa).

The N-terminal stretch at 1–21 is a signal peptide; it reads MHLNLAGLAVAATAFLATASA. TPR repeat units follow at residues 33–66, 67–100, 102–134, 176–209, 211–244, 315–348, and 349–382; these read VSNL…DPTN, YLSL…KPGF, GAHL…PKSA, PHLR…KPGD, SPHI…DPDS, LENL…NPDS, and FWGL…RPDQ. The region spanning 404–473 is the J domain; sequence DYYKVLGVEN…ELRARFDRGD (70 aa). Basic and acidic residues predominate over residues 464 to 474; that stretch reads ELRARFDRGDD. Residues 464–521 are disordered; that stretch reads ELRARFDRGDDPNSQERPNPFQGQGNPFGGGHPFMFQQGGGGGGPNIKFQFGGQPFGF. Residues 489-508 show a composition bias toward gly residues; the sequence is NPFGGGHPFMFQQGGGGGGP. A compositionally biased stretch (low complexity) spans 509–521; it reads NIKFQFGGQPFGF.

It localises to the endoplasmic reticulum lumen. In terms of biological role, endoplasmic reticulum co-chaperone required for the of virulence factors such as PG1, the major endopolygalacturonase produced during the infection of tomato plants. The chain is Tetratricopeptide repeat and J domain-containing co-chaperone DNJ1 from Fusarium oxysporum f. sp. lycopersici (strain 4287 / CBS 123668 / FGSC 9935 / NRRL 34936) (Fusarium vascular wilt of tomato).